A 640-amino-acid chain; its full sequence is Choline O-acetyltransferase (640 aa).

Ser-17 is subject to Phosphoserine. Catalysis depends on His-334, which acts as the Proton acceptor. Ser-365 carries the post-translational modification Phosphoserine. CoA-binding positions include 412 to 424 (GKTF…YSPD), Ser-450, and Gln-551. A disordered region spans residues 614–640 (CSSRQPADSKPPAPKEKARGPSQAKQS).

The protein belongs to the carnitine/choline acetyltransferase family. As to quaternary structure, monomer.

It carries out the reaction choline + acetyl-CoA = acetylcholine + CoA. Catalyzes the reversible synthesis of acetylcholine (ACh) from acetyl CoA and choline at cholinergic synapses. The chain is Choline O-acetyltransferase (Chat) from Rattus norvegicus (Rat).